The primary structure comprises 420 residues: Exodeoxyribonuclease 7 large subunit (420 aa).

This sequence belongs to the XseA family. As to quaternary structure, heterooligomer composed of large and small subunits.

It is found in the cytoplasm. It carries out the reaction Exonucleolytic cleavage in either 5'- to 3'- or 3'- to 5'-direction to yield nucleoside 5'-phosphates.. Its function is as follows. Bidirectionally degrades single-stranded DNA into large acid-insoluble oligonucleotides, which are then degraded further into small acid-soluble oligonucleotides. This chain is Exodeoxyribonuclease 7 large subunit, found in Helicobacter pylori (strain Shi470).